The chain runs to 961 residues: ATPase 7, plasma membrane-type (961 aa).

Residues 1–64 (MTDIEALKAI…EKKESKILKF (64 aa)) are Cytoplasmic-facing. The chain crosses the membrane as a helical span at residues 65–84 (LGFMWNPLSWVMEAAALMAI). Residues 85-96 (GLAHGGGKPADY) lie on the Extracellular side of the membrane. Residues 97–117 (HDFVGIVVLLLINSTISFVEE) traverse the membrane as a helical segment. Residues 118 to 246 (NNAGNAAAAL…GHFQKVLTAI (129 aa)) are Cytoplasmic-facing. A helical membrane pass occupies residues 247-267 (GNFCICSIAVGMAIEIVVIYG). At 268-276 (LQKRGYRVG) the chain is on the extracellular side. Residues 277-294 (IDNLLVLLIGGIPIAMPT) traverse the membrane as a helical segment. The Cytoplasmic segment spans residues 295–643 (VLSVTMAIGA…TSRAIFQRMK (349 aa)). Asp-332 functions as the 4-aspartylphosphate intermediate in the catalytic mechanism. 2 residues coordinate Mg(2+): Asp-588 and Asp-592. A helical membrane pass occupies residues 644 to 665 (NYTIYAVSITIRIVMGFMLLCV). Over 666–670 (FWEFD) the chain is Extracellular. A helical transmembrane segment spans residues 671–693 (FPPFMVLVIAILNDGTIMTISKD). At 694–709 (RVKPSPTPDCWKLKEI) the chain is on the cytoplasmic side. A helical membrane pass occupies residues 710 to 730 (FATGVVLGAYLAIMTVVFFWA). At 731-764 (AYETNFFHNIFHVRNFNQHHFKMKDKKVAAHLNE) the chain is on the extracellular side. The helical transmembrane segment at 765-785 (QMASAVYLQVSTISQALIFVT) threads the bilayer. The Cytoplasmic portion of the chain corresponds to 786-797 (RSRSWSFVERPG). The helical transmembrane segment at 798-818 (FLLVIAFLIAQLVASVISAMA) threads the bilayer. The Extracellular portion of the chain corresponds to 819-826 (NWPFAGIR). Residues 827–847 (SIGWGWTGVIWIFNIVTYMLL) traverse the membrane as a helical segment. The Cytoplasmic segment spans residues 848–961 (DPIKFLVRYA…EDPNSNNYTI (114 aa)). At Thr-894 the chain carries Phosphothreonine. Residues Ser-910 and Ser-942 each carry the phosphoserine modification. The interval 959-961 (YTI) is interaction with 14-3-3 proteins. Residue Thr-960 is modified to Phosphothreonine.

The protein belongs to the cation transport ATPase (P-type) (TC 3.A.3) family. Type IIIA subfamily. In terms of assembly, binds to 14-3-3 proteins. The binding is induced by phosphorylation of Thr-960. Binding to 14-3-3 proteins activates the H(+)-ATPase. Expressed in guard cells, roots and leaves, and barely in mesophyll cells.

The protein localises to the membrane. The catalysed reaction is ATP + H2O + H(+)(in) = ADP + phosphate + 2 H(+)(out). Functionally, the plasma membrane H(+) ATPase of plants and fungi generates a proton gradient that drives the active transport of nutrients by H(+)-symport. The resulting external acidification and/or internal alkinization may mediate growth responses. In Arabidopsis thaliana (Mouse-ear cress), this protein is ATPase 7, plasma membrane-type (AHA7).